Reading from the N-terminus, the 498-residue chain is Glycerol kinase (498 aa).

T12 is an ADP binding site. ATP contacts are provided by T12, T13, and S14. Residue T12 coordinates sn-glycerol 3-phosphate. Position 16 (R16) interacts with ADP. The sn-glycerol 3-phosphate site is built by R82, E83, Y134, and D243. R82, E83, Y134, D243, and Q244 together coordinate glycerol. Residues T265 and G308 each contribute to the ADP site. Residues T265, G308, Q312, and G411 each coordinate ATP. G411 serves as a coordination point for ADP.

The protein belongs to the FGGY kinase family.

The catalysed reaction is glycerol + ATP = sn-glycerol 3-phosphate + ADP + H(+). The protein operates within polyol metabolism; glycerol degradation via glycerol kinase pathway; sn-glycerol 3-phosphate from glycerol: step 1/1. With respect to regulation, inhibited by fructose 1,6-bisphosphate (FBP). Its function is as follows. Key enzyme in the regulation of glycerol uptake and metabolism. Catalyzes the phosphorylation of glycerol to yield sn-glycerol 3-phosphate. This Brucella canis (strain ATCC 23365 / NCTC 10854 / RM-666) protein is Glycerol kinase.